Here is a 279-residue protein sequence, read N- to C-terminus: uncharacterized protein (279 aa).

3 consecutive transmembrane segments (helical) span residues 31-51 (GYIA…FHAT), 67-87 (LLSI…AKII), and 115-135 (EITG…SLAL).

It belongs to the transketolase family. Thiamine diphosphate is required as a cofactor.

It localises to the cell membrane. This is an uncharacterized protein from Sinorhizobium fredii (strain NBRC 101917 / NGR234).